A 213-amino-acid chain; its full sequence is Large ribosomal subunit protein uL1 (213 aa).

It belongs to the universal ribosomal protein uL1 family. Part of the 50S ribosomal subunit.

Binds directly to 23S rRNA. Probably involved in E site tRNA release. Functionally, protein L1 is also a translational repressor protein, it controls the translation of its operon by binding to its mRNA. This Methanococcus maripaludis (strain C5 / ATCC BAA-1333) protein is Large ribosomal subunit protein uL1.